The chain runs to 295 residues: 5'-adenylylsulfate reductase-like 6 (295 aa).

Residues 1–22 (MEKKLTLLLLVVVVLFVNLTNA) form the signal peptide. The Thioredoxin domain maps to 23–161 (TVRVQICPRE…LVAFYTDVTG (139 aa)). The N-linked (GlcNAc...) asparagine glycan is linked to asparagine 136. A helical membrane pass occupies residues 208–228 (ATVFVLLRLLHLISPTMVVFV).

The protein localises to the membrane. This is 5'-adenylylsulfate reductase-like 6 (APRL6) from Arabidopsis thaliana (Mouse-ear cress).